The primary structure comprises 440 residues: Na(+)/H(+) antiporter NhaA (440 aa).

Helical transmembrane passes span phenylalanine 25–valine 45, leucine 76–valine 96, threonine 112–methionine 132, glycine 141–glycine 161, valine 170–glycine 190, serine 194–serine 214, valine 225–isoleucine 245, histidine 312–isoleucine 332, valine 345–isoleucine 365, tryptophan 378–isoleucine 398, and glycine 414–leucine 434.

This sequence belongs to the NhaA Na(+)/H(+) (TC 2.A.33) antiporter family.

The protein resides in the cell inner membrane. It catalyses the reaction Na(+)(in) + 2 H(+)(out) = Na(+)(out) + 2 H(+)(in). Na(+)/H(+) antiporter that extrudes sodium in exchange for external protons. The chain is Na(+)/H(+) antiporter NhaA from Rhodopirellula baltica (strain DSM 10527 / NCIMB 13988 / SH1).